Here is a 592-residue protein sequence, read N- to C-terminus: Inactive heparanase-2 (592 aa).

The N-terminal stretch at 1–38 (MRVLCAFPEAMASSSSRPPSCLALVALFLALLLHLSLS) is a signal peptide. Asn-254 and Asn-392 each carry an N-linked (GlcNAc...) asparagine glycan.

Belongs to the glycosyl hydrolase 79 family. Interacts with HPSE. Interacts with SDC1 (via glycan chains).

It is found in the secreted. Its subcellular location is the extracellular space. The protein resides in the extracellular matrix. Binds heparin and heparan sulfate with high affinity, but lacks heparanase activity. Inhibits HPSE, possibly by competing for its substrates (in vitro). This chain is Inactive heparanase-2 (Hpse2), found in Mus musculus (Mouse).